A 92-amino-acid chain; its full sequence is MTRSLKKNPFVANHLLRKIEKLNKKAEKEIIVTWSRASTIIPTMIGHTIAIHNGREHLPIYITDRMVGHKLGEFAPTLNFRGHAKNDNKSRR.

The protein belongs to the universal ribosomal protein uS19 family. In terms of assembly, component of the chloroplast small ribosomal subunit (SSU). Mature 70S chloroplast ribosomes of higher plants consist of a small (30S) and a large (50S) subunit. The 30S small subunit contains 1 molecule of ribosomal RNA (16S rRNA) and 24 different proteins. The 50S large subunit contains 3 rRNA molecules (23S, 5S and 4.5S rRNA) and 33 different proteins. uS19c binds directly to 16S ribosomal RNA.

It localises to the plastid. Its subcellular location is the chloroplast. Functionally, component of the chloroplast ribosome (chloro-ribosome), a dedicated translation machinery responsible for the synthesis of chloroplast genome-encoded proteins, including proteins of the transcription and translation machinery and components of the photosynthetic apparatus. The sequence is that of Small ribosomal subunit protein uS19c (rps19) from Spinacia oleracea (Spinach).